We begin with the raw amino-acid sequence, 1050 residues long: Atrial natriuretic peptide receptor 2 (1050 aa).

The signal sequence occupies residues Met-1–Cys-19. The Extracellular portion of the chain corresponds to Arg-20 to Leu-460. Residues Asn-26 and Asn-74 are each glycosylated (N-linked (GlcNAc...) asparagine). Cysteines 84 and 110 form a disulfide. N-linked (GlcNAc...) asparagine glycans are attached at residues Asn-169, Asn-203, Asn-285, Asn-352, Asn-366, and Asn-415. A disulfide bridge links Cys-236 with Cys-339. The chain crosses the membrane as a helical span at residues Gly-461–Ile-481. Topologically, residues Tyr-482–Ile-1050 are cytoplasmic. The 274-residue stretch at Ser-517–Val-790 folds into the Protein kinase domain. Positions Thr-865–Glu-995 constitute a Guanylate cyclase domain.

It belongs to the adenylyl cyclase class-4/guanylyl cyclase family. In terms of processing, phosphorylated. Phosphorylation of the protein kinase-like domain is required for full activation by CNP. Post-translationally, glycosylated. High levels found in liver, atrium and gill. Moderate levels found in brain and ventricle, and low levels in esophageal sphincter, stomach, posterior intestine and kidney.

It is found in the cell membrane. It carries out the reaction GTP = 3',5'-cyclic GMP + diphosphate. Its function is as follows. Receptor for the C-type natriuretic peptide NPPC/CNP hormone. Has guanylate cyclase activity upon binding of its ligand. May play a role in the regulation of skeletal growth. In Anguilla japonica (Japanese eel), this protein is Atrial natriuretic peptide receptor 2 (npr2).